Reading from the N-terminus, the 960-residue chain is CWF19-like protein 2 (960 aa).

Disordered regions lie at residues 1–222 (MAAY…AGVV), 261–552 (EFQK…ELIL), 624–648 (AWPV…AIET), and 712–731 (AQKE…AVQE). A coiled-coil region spans residues 13 to 101 (SIKSRKESKR…KKAKKEKKDE (89 aa)). The span at 16 to 52 (SRKESKREERERVIQKAKEKFEKEERRKAERKARGED) shows a compositional bias: basic and acidic residues. Positions 73–96 (KTKKAKKEKKAKKSKKEKKKKAKK) are enriched in basic residues. The segment covering 108–117 (SSEDSEDEWV) has biased composition (acidic residues). Residues 135–146 (EATPSSSSASNN) show a composition bias toward low complexity. The stretch at 163–279 (SVADRRAQKE…EDAAYGERRD (117 aa)) forms a coiled coil. Composition is skewed to basic and acidic residues over residues 165 to 181 (ADRR…ERQK), 261 to 372 (EFQK…DDLS), and 404 to 417 (KPVD…EAGF). A compositionally biased stretch (polar residues) spans 507-518 (SAVQDSETPTLQ). Residues 540–605 (SESEEEEEEE…IKDQSKRASK (66 aa)) are a coiled coil. Residues 541-552 (ESEEEEEEELIL) are compositionally biased toward acidic residues. The span at 713–731 (QKERAGRDEERQRNKAVQE) shows a compositional bias: basic and acidic residues.

This sequence belongs to the CWF19 family.

This Danio rerio (Zebrafish) protein is CWF19-like protein 2 (cwf19l2).